Here is a 691-residue protein sequence, read N- to C-terminus: DNA ligase (691 aa).

NAD(+) contacts are provided by residues 53–57 (DSEYD), 102–103 (SL), and Glu-135. Lys-137 serves as the catalytic N6-AMP-lysine intermediate. NAD(+)-binding residues include Arg-158, Glu-195, Lys-310, and Lys-334. Zn(2+)-binding residues include Cys-428, Cys-431, Cys-446, and Cys-452. The region spanning 613–691 (SEGLPLDGQT…EEEFLVLVGE (79 aa)) is the BRCT domain.

Belongs to the NAD-dependent DNA ligase family. LigA subfamily. Mg(2+) serves as cofactor. Mn(2+) is required as a cofactor.

The catalysed reaction is NAD(+) + (deoxyribonucleotide)n-3'-hydroxyl + 5'-phospho-(deoxyribonucleotide)m = (deoxyribonucleotide)n+m + AMP + beta-nicotinamide D-nucleotide.. In terms of biological role, DNA ligase that catalyzes the formation of phosphodiester linkages between 5'-phosphoryl and 3'-hydroxyl groups in double-stranded DNA using NAD as a coenzyme and as the energy source for the reaction. It is essential for DNA replication and repair of damaged DNA. This Psychrobacter cryohalolentis (strain ATCC BAA-1226 / DSM 17306 / VKM B-2378 / K5) protein is DNA ligase.